We begin with the raw amino-acid sequence, 182 residues long: Neuropeptide CCHamide-1 (182 aa).

An N-terminal signal peptide occupies residues 1–22; the sequence is MWYSKCSWTLVVLVALFALVTG. Cys24 and Cys31 are oxidised to a cystine. The residue at position 35 (His35) is a Histidine amide. A propeptide spanning residues 39–182 is cleaved from the precursor; the sequence is SGGKAVIDAK…ENYSGYELTK (144 aa). Disordered regions lie at residues 67–103 and 133–154; these read NNNNNNQNNQDDDNNDDDSNRNTNANSANNIPLAAPA and QLQDQQQQGRGRGGQGQYDAAA. Low complexity predominate over residues 87–103; the sequence is RNTNANSANNIPLAAPA. Residue Asn174 is glycosylated (N-linked (GlcNAc...) asparagine).

In terms of tissue distribution, expressed in endocrine cells of the larval midgut (at protein level). In the brain, expressed in the optic lobes, lateral protocerebrum, subesophageal ganglion, and intermediate and superior medial protocerebrum (at protein level). Expressed in DN1a neurons but not in other clock neurons and expression follows a rhythmic pattern controlled by the circadian clock (at protein level). In the posterior midgut, expressed in enteroendocrine cells (at protein level). Low levels in larval brain with higher levels in larval and adult gut and adult brain.

The protein resides in the secreted. Neuropeptide ligand for the CCHamide-1 receptor CCHa1-R. Neuromessenger mediating signaling between neuronal cells of the circadian clock network involved in regulation of sleep latency (the time required to fall asleep), amount of sleep and depth of sleep (arousability). Together with PDF, involved in regulating intensity and periodicity of daytime activity. In subsets of clock neurons modulates the rhythmic expression of PDP1 and PDF, and together with PDF modulates the rhythmic expression of circadian protein PER/period, but not TIM/timeless. Mediates signaling from DN1a (anterior dorsal neurons 1) clock neurons to s-LNv (small ventral lateral neurons) clock neurons through CCHa1-R, contributing to regulation of activity rhythms by the circadian clock, particularly in the morning. May be involved in signaling between clock neurons and non-clock neurons, such as the fan-shaped body, involved in sleep homeostasis. In response to a high protein diet mediates hormonal signaling between the gut and a CCHa1-R expressing subset of dopaminergic cells in the protocerebral anterior medial (PAM) cluster of the brain. This suppresses arousability by mechano-sensory stimulation (but not thermal stimulation) but is not involved in regulation of sleep patterns. The polypeptide is Neuropeptide CCHamide-1 (Drosophila melanogaster (Fruit fly)).